A 61-amino-acid polypeptide reads, in one-letter code: Small ribosomal subunit protein uS14 (61 aa).

Positions 24, 27, 40, and 43 each coordinate Zn(2+).

It belongs to the universal ribosomal protein uS14 family. Zinc-binding uS14 subfamily. Part of the 30S ribosomal subunit. Contacts proteins S3 and S10. Requires Zn(2+) as cofactor.

Functionally, binds 16S rRNA, required for the assembly of 30S particles and may also be responsible for determining the conformation of the 16S rRNA at the A site. This chain is Small ribosomal subunit protein uS14, found in Alkaliphilus oremlandii (strain OhILAs) (Clostridium oremlandii (strain OhILAs)).